We begin with the raw amino-acid sequence, 348 residues long: Dihydroorotase (348 aa).

Zn(2+)-binding residues include histidine 17 and histidine 19. Residues 19–21 and asparagine 45 each bind substrate; that span reads HLR. Residues lysine 103, histidine 140, and histidine 178 each contribute to the Zn(2+) site. N6-carboxylysine is present on lysine 103. Position 140 (histidine 140) interacts with substrate. Leucine 223 is a binding site for substrate. Aspartate 251 provides a ligand contact to Zn(2+). The active site involves aspartate 251. 2 residues coordinate substrate: histidine 255 and alanine 267.

The protein belongs to the metallo-dependent hydrolases superfamily. DHOase family. Class II DHOase subfamily. In terms of assembly, homodimer. It depends on Zn(2+) as a cofactor.

The enzyme catalyses (S)-dihydroorotate + H2O = N-carbamoyl-L-aspartate + H(+). It participates in pyrimidine metabolism; UMP biosynthesis via de novo pathway; (S)-dihydroorotate from bicarbonate: step 3/3. Functionally, catalyzes the reversible cyclization of carbamoyl aspartate to dihydroorotate. The polypeptide is Dihydroorotase (Salmonella paratyphi C (strain RKS4594)).